The following is a 307-amino-acid chain: E3 ubiquitin-protein ligase PHF7 (307 aa).

The segment at 30 to 68 (SPVCLLCLQEPGDPEKLGEFLQKDNLCVHYFCLILSSRL) adopts a C2HC pre-PHD-type zinc-finger fold. Residues cysteine 33, cysteine 36, histidine 58, and cysteine 61 each coordinate Zn(2+). Residues 67–92 (RLPQKGQPNRGLHGFMPEDIKREAVR) form a required for interaction and ubiquitination of the nucleosome core particle region. Residues 96–145 (KICFVCKKKGAAIRCQNDQCVQNFHLPCGQERGCLSQFFGEYKSYCRKHR) form a PHD-type zinc finger. Zn(2+) is bound by residues cysteine 98, cysteine 101, cysteine 110, cysteine 115, histidine 120, cysteine 123, cysteine 141, histidine 144, cysteine 160, cysteine 163, cysteine 179, cysteine 180, histidine 186, cysteine 189, cysteine 204, cysteine 207, cysteine 248, cysteine 253, cysteine 273, cysteine 276, histidine 282, cysteine 285, cysteine 297, and cysteine 300. The required for interaction with ubiquitinated UBE2D2 stretch occupies residues 150–307 (IHQGSLGEES…NECLPASTTS (158 aa)). Residues 160–208 (CVLCCENLSRTSVENIQSPCCSQAIYHRKCIQKYAHTSAKHFFKCPQCN) form an RING-type; degenerate zinc finger. The interval 244-301 (RYRHCDAPICLYEQGRDSFEDEGRWRLILCATCGSHGTHRDCSSLRPNSKKWECNECL) is required for association with and ubiquitination of H3.

In terms of assembly, interacts with MEF2C; the interaction promotes MEF2C binding to its transcription targets. Interacts with GATA4; the interaction promotes GATA4 binding to its transcription targets. Interacts with UBE2D2; the interaction inhibits cleavage of PHF7 and promotes association of the complex with the nucleosome core particle. Expressed in Leydig cells and in developing spermatids (at protein level). Highly expressed in Sertoli cells in testis.

Its subcellular location is the nucleus. The enzyme catalyses S-ubiquitinyl-[E2 ubiquitin-conjugating enzyme]-L-cysteine + [acceptor protein]-L-lysine = [E2 ubiquitin-conjugating enzyme]-L-cysteine + N(6)-ubiquitinyl-[acceptor protein]-L-lysine.. The protein operates within protein modification; protein ubiquitination. E3 ubiquitin-protein ligase which ubiquitinates histone H3 at 'Lys-14'. Required for male fertility, via inhibition of SPOP-mediated BRDT degradation when in the presence of acetylated histone H4 in early condensing spermatids. Stabilization of BRDT allows it to facilitate histone removal in early condensing spermatids and promote the progression of histone-to-protamine exchange. Promotes the expression of steroidogenesis proteins in the testes, and as a result plays a role in maintaining testosterone levels and repressing osteoclastogenesis. Promotes transcription of cardiac enhancer genes by facilitating binding of cardiac transcription factors such as MEF2C and GATA4 to target gene promoters. Ubiquitinates histone H4. Ubiquitinates histone H2A and H3 as part of the nucleosome core particle. This is E3 ubiquitin-protein ligase PHF7 from Mus musculus (Mouse).